Reading from the N-terminus, the 461-residue chain is GTPase Era, mitochondrial (461 aa).

The N-terminal 35 residues, 1–35 (MAAPWLQRWRGAYAGPSGPLRLVRLHGVQRSSWRA), are a transit peptide targeting the mitochondrion. Residues 39–73 (AAGAFGAGPHPGPPQRAANPGPGPHPPPVATSREK) form a disordered region. An Era-type G domain is found at 89–354 (KVLRISIIGA…QYLLMQAKPG (266 aa)). Residues 97-104 (GAPNSGKS) are G1. 97 to 104 (GAPNSGKS) is a GTP binding site. The tract at residues 123–127 (HTTRC) is G2. The G3 stretch occupies residues 144-147 (DTPG). GTP contacts are provided by residues 144–148 (DTPGL) and 213–216 (NKVD). The interval 213-216 (NKVD) is G4. The tract at residues 260–319 (KVTQTPPPENRARESPCQLETDKAQEGSSLDNSSDVKASESSLDTEAREQKPYKYGDQKN) is disordered. A compositionally biased stretch (basic and acidic residues) spans 269 to 284 (NRARESPCQLETDKAQ). Over residues 285–303 (EGSSLDNSSDVKASESSLD) the composition is skewed to polar residues. Basic and acidic residues predominate over residues 304–319 (TEAREQKPYKYGDQKN). Residues 332 to 334 (LAA) are G5. A KH type-2 domain is found at 380-461 (ILEYLPLEVP…RLKLKVEVKS (82 aa)).

Belongs to the TRAFAC class TrmE-Era-EngA-EngB-Septin-like GTPase superfamily. Era GTPase family.

It localises to the mitochondrion matrix. The protein resides in the mitochondrion inner membrane. Probable GTPase that plays a role in the mitochondrial ribosomal small subunit assembly. Specifically binds the 12S mitochondrial rRNA (12S mt-rRNA) to a 33 nucleotide section delineating the 3' terminal stem-loop region. May act as a chaperone that protects the 12S mt-rRNA on the 28S mitoribosomal subunit during ribosomal small subunit assembly. This chain is GTPase Era, mitochondrial (ERAL1), found in Gallus gallus (Chicken).